The chain runs to 282 residues: Pantothenate synthetase (282 aa).

30–37 (MGALHAGH) contacts ATP. The active-site Proton donor is the His37. Gln61 contributes to the (R)-pantoate binding site. A beta-alanine-binding site is contributed by Gln61. 147–150 (GEKD) contacts ATP. Gln153 serves as a coordination point for (R)-pantoate. ATP is bound by residues Val176 and 184–187 (LSSR).

The protein belongs to the pantothenate synthetase family. In terms of assembly, homodimer.

It is found in the cytoplasm. It catalyses the reaction (R)-pantoate + beta-alanine + ATP = (R)-pantothenate + AMP + diphosphate + H(+). Its pathway is cofactor biosynthesis; (R)-pantothenate biosynthesis; (R)-pantothenate from (R)-pantoate and beta-alanine: step 1/1. In terms of biological role, catalyzes the condensation of pantoate with beta-alanine in an ATP-dependent reaction via a pantoyl-adenylate intermediate. This is Pantothenate synthetase from Bacteroides fragilis (strain YCH46).